A 30-amino-acid chain; its full sequence is Unknown protein from spot 365 of 2D-PAGE of etiolated coleoptile (30 aa).

It belongs to the zinc-containing alcohol dehydrogenase family.

In Zea mays (Maize), this protein is Unknown protein from spot 365 of 2D-PAGE of etiolated coleoptile.